The primary structure comprises 681 residues: Secretion system apparatus protein SsaV (681 aa).

Helical transmembrane passes span 24-44 (MVLA…LPTW), 48-68 (ILIT…IYLS), 73-93 (LSVF…LTIS), 118-138 (GNLT…FIVI), 206-226 (TIAG…IAIV), 244-264 (IGDG…AGII), and 295-315 (AVVL…LAFF).

This sequence belongs to the FHIPEP (flagella/HR/invasion proteins export pore) family.

The protein localises to the cell inner membrane. Functionally, component of Salmonella pathogenicity island 2 (SPI-2) type III secretion system, required for secretion of some type III-secreted effectors including the SpvB exotoxin. The chain is Secretion system apparatus protein SsaV (ssaV) from Salmonella typhimurium (strain 14028s / SGSC 2262).